The following is a 198-amino-acid chain: Peroxiredoxin-2 (198 aa).

An N-acetylalanine modification is found at A2. Residues 6-164 (AHIGKPAPDF…ALRLVQAFQY (159 aa)) form the Thioredoxin domain. Residue C51 is the Cysteine sulfenic acid (-SOH) intermediate of the active site. S112 carries the post-translational modification Phosphoserine. T182 is subject to Phosphothreonine. Residue K196 is modified to N6-acetyllysine.

The protein belongs to the peroxiredoxin family. AhpC/Prx1 subfamily. In terms of assembly, homodimer; disulfide-linked, upon oxidation. 5 homodimers assemble to form a ring-like decamer. Interacts with TIPIN. In terms of processing, the enzyme can be inactivated by further oxidation of the cysteine sulfenic acid (C(P)-SOH) to sulphinic acid (C(P)-SO2H) instead of its condensation to a disulfide bond. It can be reactivated by forming a transient disulfide bond with sulfiredoxin SRXN1, which reduces the cysteine sulfinic acid in an ATP- and Mg-dependent manner. Acetylation increases resistance to transition to high molecular-mass complexes. Deacetylated by HDAC6 which decreases reducing activity.

The protein localises to the cytoplasm. The enzyme catalyses a hydroperoxide + [thioredoxin]-dithiol = an alcohol + [thioredoxin]-disulfide + H2O. Its function is as follows. Thiol-specific peroxidase that catalyzes the reduction of hydrogen peroxide and organic hydroperoxides to water and alcohols, respectively. Plays a role in cell protection against oxidative stress by detoxifying peroxides and as sensor of hydrogen peroxide-mediated signaling events. Might participate in the signaling cascades of growth factors and tumor necrosis factor-alpha by regulating the intracellular concentrations of H(2)O(2). In Cricetulus griseus (Chinese hamster), this protein is Peroxiredoxin-2 (PRDX2).